The following is a 141-amino-acid chain: HTH-type transcriptional regulator LrpA (141 aa).

One can recognise an HTH asnC-type domain in the interval 2 to 63 (VDERDKIILD…KINPKKLGYS (62 aa)). A DNA-binding region (H-T-H motif) is located at residues 21 to 40 (FTEIAKILGISETAVRKRVK).

As to quaternary structure, homooctamer; tetramer of dimers.

In terms of biological role, DNA-binding protein that negatively regulates its own transcription. Interferes with RNA polymerase (RNAP) recruitment by inhibiting the association of RNAP with the TBP-TFB promoter complex. The protein is HTH-type transcriptional regulator LrpA (lrpA) of Pyrococcus abyssi (strain GE5 / Orsay).